Here is a 362-residue protein sequence, read N- to C-terminus: uncharacterized protein (362 aa).

This is an uncharacterized protein from Escherichia coli (strain K12).